Consider the following 938-residue polypeptide: RIPOR family member 3 (938 aa).

Residues Ser9, Ser24, and Ser340 each carry the phosphoserine modification. Residue Thr345 is modified to Phosphothreonine. Phosphoserine is present on residues Ser351 and Ser384. Disordered regions lie at residues 402–430 and 579–603; these read EMDS…FLPV and FGGS…SPSE.

Belongs to the RIPOR family.

This is RIPOR family member 3 from Mus musculus (Mouse).